A 232-amino-acid polypeptide reads, in one-letter code: 6-hydroxymethyl-7,8-dihydropterin pyrophosphokinase (232 aa).

This sequence belongs to the archaeal 6-HMPDK family. Mg(2+) is required as a cofactor.

The catalysed reaction is 6-hydroxymethyl-7,8-dihydropterin + ATP = (7,8-dihydropterin-6-yl)methyl diphosphate + AMP + H(+). Its pathway is cofactor biosynthesis; 5,6,7,8-tetrahydromethanopterin biosynthesis. Catalyzes the transfer of diphosphate from ATP to 6-hydroxymethyl-7,8-dihydropterin (6-HMD), leading to 6-hydroxymethyl-7,8-dihydropterin diphosphate (6-HMDP). The polypeptide is 6-hydroxymethyl-7,8-dihydropterin pyrophosphokinase (Methanothermobacter thermautotrophicus (strain ATCC 29096 / DSM 1053 / JCM 10044 / NBRC 100330 / Delta H) (Methanobacterium thermoautotrophicum)).